The primary structure comprises 499 residues: Long chain base biosynthesis protein 2b (499 aa).

Residues 5-25 (VPYVTAATTLFSFGLIFGFGH) traverse the membrane as a helical segment. N6-(pyridoxal phosphate)lysine is present on K322.

This sequence belongs to the class-II pyridoxal-phosphate-dependent aminotransferase family. Heterodimer with LCB1. Component of the serine palmitoyltransferase (SPT) complex, composed of LCB1 and LCB2. Pyridoxal 5'-phosphate is required as a cofactor.

Its subcellular location is the endoplasmic reticulum membrane. It carries out the reaction L-serine + hexadecanoyl-CoA + H(+) = 3-oxosphinganine + CO2 + CoA. It participates in lipid metabolism; sphingolipid metabolism. Its function is as follows. Serine palmitoyltransferase (SPT). The heterodimer formed with LCB1 constitutes the catalytic core. This is Long chain base biosynthesis protein 2b from Oryza sativa subsp. japonica (Rice).